Here is a 365-residue protein sequence, read N- to C-terminus: Phospho-N-acetylmuramoyl-pentapeptide-transferase (365 aa).

Transmembrane regions (helical) follow at residues I2–L22, T51–Y71, P80–I100, G118–P138, V167–I187, L196–F216, P234–Y254, S256–A276, A277–I297, and F340–V360.

Belongs to the glycosyltransferase 4 family. MraY subfamily. Mg(2+) is required as a cofactor.

The protein localises to the cell membrane. The catalysed reaction is UDP-N-acetyl-alpha-D-muramoyl-L-alanyl-gamma-D-glutamyl-meso-2,6-diaminopimeloyl-D-alanyl-D-alanine + di-trans,octa-cis-undecaprenyl phosphate = di-trans,octa-cis-undecaprenyl diphospho-N-acetyl-alpha-D-muramoyl-L-alanyl-D-glutamyl-meso-2,6-diaminopimeloyl-D-alanyl-D-alanine + UMP. Its pathway is cell wall biogenesis; peptidoglycan biosynthesis. In terms of biological role, catalyzes the initial step of the lipid cycle reactions in the biosynthesis of the cell wall peptidoglycan: transfers peptidoglycan precursor phospho-MurNAc-pentapeptide from UDP-MurNAc-pentapeptide onto the lipid carrier undecaprenyl phosphate, yielding undecaprenyl-pyrophosphoryl-MurNAc-pentapeptide, known as lipid I. This Bifidobacterium adolescentis (strain ATCC 15703 / DSM 20083 / NCTC 11814 / E194a) protein is Phospho-N-acetylmuramoyl-pentapeptide-transferase.